Here is a 119-residue protein sequence, read N- to C-terminus: Small ribosomal subunit protein uS13m (119 aa).

This sequence belongs to the universal ribosomal protein uS13 family. Part of the small ribosomal subunit.

It is found in the mitochondrion. Functionally, located at the top of the head of the small subunit, it contacts several helices of the small subunit rRNA. This chain is Small ribosomal subunit protein uS13m (RPS13), found in Prototheca wickerhamii.